The following is a 98-amino-acid chain: Major carboxysome shell protein CsoS1A (98 aa).

One can recognise a BMC domain in the interval 8 to 93 (ALGMIETRGL…VHSEVENILP (86 aa)).

Belongs to the bacterial microcompartments protein family. CsoS1 subfamily. As to quaternary structure, homohexamer with a small central pore; the concave side is mostly positive electrostatic potential, whereas the convex side is mostly negative electrostatic potential. Forms a CsoS2-CsoS1-RuBisCO complex. Interacts with the N-terminus (residues 1-136) of RuBisCO (CbbL).

It localises to the carboxysome. Its function is as follows. The major shell protein of the carboxysome, a polyhedral inclusion where RuBisCO (ribulose bisphosphate carboxylase, ccbL-ccbS) is sequestered. Assembles into hexamers which make sheets that form the facets of the polyhedral carboxysome. The shell probably limits the diffusion of CO(2) into and out of the carboxysome. Molecular modeling shows the central pore of this protein is selectively permeable to anions such as HCO(3) rather than CO(2) or O(2). There are estimated to be 2970 CsoS1A/CsoS1C proteins per carboxysome (the proteins differ by only 1 residue). In terms of biological role, unlike beta-carboxysomes, alpha-carboxysomes (Cb) can form without cargo protein. CsoS2 is essential for Cb formation and is also capable of targeting foreign proteins to the Cb. The Cb shell assembles with the aid of CsoS2; CsoS1A, CsoS1B and CsoS1C form the majority of the shell while CsoS4A and CsoS4B form vertices. CsoS1D forms pseudohexamers that probably control metabolite flux into and out of the shell. The polypeptide is Major carboxysome shell protein CsoS1A (Halothiobacillus neapolitanus (strain ATCC 23641 / c2) (Thiobacillus neapolitanus)).